The chain runs to 337 residues: Nicotinate-nucleotide--dimethylbenzimidazole phosphoribosyltransferase (337 aa).

Glu-305 serves as the catalytic Proton acceptor.

The protein belongs to the CobT family.

The enzyme catalyses 5,6-dimethylbenzimidazole + nicotinate beta-D-ribonucleotide = alpha-ribazole 5'-phosphate + nicotinate + H(+). It functions in the pathway nucleoside biosynthesis; alpha-ribazole biosynthesis; alpha-ribazole from 5,6-dimethylbenzimidazole: step 1/2. Functionally, catalyzes the synthesis of alpha-ribazole-5'-phosphate from nicotinate mononucleotide (NAMN) and 5,6-dimethylbenzimidazole (DMB). This Jannaschia sp. (strain CCS1) protein is Nicotinate-nucleotide--dimethylbenzimidazole phosphoribosyltransferase.